Here is a 309-residue protein sequence, read N- to C-terminus: Porphobilinogen deaminase (309 aa).

C244 bears the S-(dipyrrolylmethanemethyl)cysteine mark.

Belongs to the HMBS family. In terms of assembly, monomer. Requires dipyrromethane as cofactor.

The catalysed reaction is 4 porphobilinogen + H2O = hydroxymethylbilane + 4 NH4(+). It functions in the pathway porphyrin-containing compound metabolism; protoporphyrin-IX biosynthesis; coproporphyrinogen-III from 5-aminolevulinate: step 2/4. Its function is as follows. Tetrapolymerization of the monopyrrole PBG into the hydroxymethylbilane pre-uroporphyrinogen in several discrete steps. This chain is Porphobilinogen deaminase, found in Listeria innocua serovar 6a (strain ATCC BAA-680 / CLIP 11262).